The primary structure comprises 279 residues: Energy-coupling factor transporter ATP-binding protein EcfA1 (279 aa).

One can recognise an ABC transporter domain in the interval 6–240 (VRLEHVFYKY…ADAMRAIGLG (235 aa)). 40–47 (GHNGSGKS) is an ATP binding site.

Belongs to the ABC transporter superfamily. Energy-coupling factor EcfA family. As to quaternary structure, forms a stable energy-coupling factor (ECF) transporter complex composed of 2 membrane-embedded substrate-binding proteins (S component), 2 ATP-binding proteins (A component) and 2 transmembrane proteins (T component).

The protein localises to the cell membrane. Its function is as follows. ATP-binding (A) component of a common energy-coupling factor (ECF) ABC-transporter complex. Unlike classic ABC transporters this ECF transporter provides the energy necessary to transport a number of different substrates. This chain is Energy-coupling factor transporter ATP-binding protein EcfA1, found in Listeria innocua serovar 6a (strain ATCC BAA-680 / CLIP 11262).